Consider the following 412-residue polypeptide: Peptidase T (412 aa).

A Zn(2+)-binding site is contributed by histidine 84. Residue aspartate 86 is part of the active site. A Zn(2+)-binding site is contributed by aspartate 146. Catalysis depends on glutamate 179, which acts as the Proton acceptor. Glutamate 180, aspartate 202, and histidine 385 together coordinate Zn(2+).

The protein belongs to the peptidase M20B family. Zn(2+) serves as cofactor.

The protein resides in the cytoplasm. It catalyses the reaction Release of the N-terminal residue from a tripeptide.. Functionally, cleaves the N-terminal amino acid of tripeptides. The chain is Peptidase T from Haemophilus influenzae (strain PittGG).